We begin with the raw amino-acid sequence, 851 residues long: MRAREIQRNWQHLGKRGILFLGILIICSAANNLWVTVYYGVPVWKEATTTLFCASDAKAYETEVHNVWATHACVPTDPNPQEVVLENVTENFNMWKNNMVEQMHTDIISLWDESLKPCVKLTPLCVTLTCTNVTNNRTNANKNDTNINATVTSTDEIKNCSFNITTELKDKKKRVSALFYKLDIVQIKQSEINQSESEDRLINCNTSTVTQACPKVSFEPIPIHYCAPAGFAILKCNNNTCNGTGPCTNVSTVQCTHGIKPVVSTQLLLNGSLAEEEIIIRSEDITKNTKNIIVQLNEAVEINCTRPSNNTRKSIHIGPGRAFYATGDIIGDIRQAHCNISGGQWNKTVNQVKKELGKHFNKTIIFQPSSGGDPQVTRHIFNCRGEFSYCDTTDTVDDTEEEEDTTITIPCRIKQIINMWQKVGQAIYAPPTAGNITCRSNITGMILTRDGGNDNNTRTEETFRPGGGDMRDNWRSELYKYKVVQIEPLGIAPTRARRRVVQREKRAVGIGALFLGFLGAAGSTMGAASITLTVQARQLLSGIVQQQNNLLRAIEAQQQMLQLTVWGIKQLRARVLAVERYLRDQQLLGIWGCSGKLICTTNVPWNSSWSNKSQSEIWENMTWMQWEKEISNHTSTIYRLIEESQIQQEKNEQDLLALDKWASLWNWFDISNWLWYIKIFIMIVGGLIGLRIVFTVLSVVNRVRQGYSPLSFQTLTPSPRGPDRPEGIEEGGGEQDKDRSVRLVSGFLALAWDDLRNLCLFSYRHLRDLVLIATRILDRGLKGSWEALKYLWNLILYWGQEIKNSAINLLNTTAIAVAEGTDRIIEIVYRAFRALLHIPRRIRQGFERLLL.

The N-terminal stretch at methionine 1–asparagine 31 is a signal peptide. At asparagine 32–isoleucine 679 the chain is on the extracellular side. An intrachain disulfide couples cysteine 53 to cysteine 73. N-linked (GlcNAc...) asparagine; by host glycans are attached at residues asparagine 87, asparagine 132, asparagine 136, asparagine 143, asparagine 148, asparagine 159, asparagine 163, asparagine 193, asparagine 205, asparagine 238, asparagine 242, asparagine 249, asparagine 270, asparagine 303, asparagine 309, asparagine 339, asparagine 346, and asparagine 361. 5 cysteine pairs are disulfide-bonded: cysteine 118–cysteine 213, cysteine 125–cysteine 204, cysteine 130–cysteine 160, cysteine 226–cysteine 255, and cysteine 236–cysteine 247. The segment at cysteine 130 to asparagine 159 is V1. The segment at cysteine 160–cysteine 204 is V2. Positions cysteine 304–histidine 337 are V3. A disulfide bond links cysteine 304 and cysteine 338. Positions serine 369–histidine 379 are CD4-binding loop. Cystine bridges form between cysteine 383-cysteine 438 and cysteine 390-cysteine 411. Positions cysteine 390–cysteine 411 are V4. Asparagine 435, asparagine 441, and asparagine 455 each carry an N-linked (GlcNAc...) asparagine; by host glycan. Positions arginine 449 to aspartate 469 are disordered. 2 V5 regions span residues aspartate 454–glycine 466 and asparagine 456–glycine 466. Residues threonine 457 to aspartate 469 are compositionally biased toward basic and acidic residues. The interval alanine 507–alanine 527 is fusion peptide. Residues lysine 569–leucine 587 are immunosuppression. Residues cysteine 593 and cysteine 599 are joined by a disulfide bond. N-linked (GlcNAc...) asparagine; by host glycans are attached at residues asparagine 606, asparagine 611, asparagine 620, and asparagine 632. A coiled-coil region spans residues lysine 628–alanine 662. An MPER; binding to GalCer region spans residues alanine 657–lysine 678. Residues phenylalanine 680–valine 700 form a helical membrane-spanning segment. The Cytoplasmic segment spans residues asparagine 701 to leucine 851. The short motif at tyrosine 707–leucine 710 is the YXXL motif; contains endocytosis signal element. Residues glutamine 713–lysine 737 are disordered. Cysteine 759 is lipidated: S-palmitoyl cysteine; by host. Positions leucine 850 to leucine 851 match the Di-leucine internalization motif motif.

The protein belongs to the HIV-1 env protein family. As to quaternary structure, the mature envelope protein (Env) consists of a homotrimer of non-covalently associated gp120-gp41 heterodimers. The resulting complex protrudes from the virus surface as a spike. There seems to be as few as 10 spikes on the average virion. Interacts with host CD4, CCR5 and CXCR4. Gp120 also interacts with the C-type lectins CD209/DC-SIGN and CLEC4M/DC-SIGNR (collectively referred to as DC-SIGN(R)). Gp120 and gp41 interact with GalCer. Gp120 interacts with host ITGA4/ITGB7 complex; on CD4+ T-cells, this interaction results in rapid activation of integrin ITGAL/LFA-1, which facilitates efficient cell-to-cell spreading of HIV-1. Gp120 interacts with cell-associated heparan sulfate; this interaction increases virus infectivity on permissive cells and may be involved in infection of CD4- cells. The mature envelope protein (Env) consists of a homotrimer of non-covalently associated gp120-gp41 heterodimers. The resulting complex protrudes from the virus surface as a spike. There seems to be as few as 10 spikes on the average virion. Highly glycosylated by host. The high number of glycan on the protein is reffered to as 'glycan shield' because it contributes to hide protein sequence from adaptive immune system. Post-translationally, palmitoylation of the transmembrane protein and of Env polyprotein (prior to its proteolytic cleavage) is essential for their association with host cell membrane lipid rafts. Palmitoylation is therefore required for envelope trafficking to classical lipid rafts, but not for viral replication. In terms of processing, specific enzymatic cleavages in vivo yield mature proteins. Envelope glycoproteins are synthesized as an inactive precursor that is heavily N-glycosylated and processed likely by host cell furin in the Golgi to yield the mature SU and TM proteins. The cleavage site between SU and TM requires the minimal sequence [KR]-X-[KR]-R. About 2 of the 9 disulfide bonds of gp41 are reduced by P4HB/PDI, following binding to CD4 receptor.

Its subcellular location is the virion membrane. It is found in the host cell membrane. The protein localises to the host endosome membrane. Its function is as follows. Oligomerizes in the host endoplasmic reticulum into predominantly trimers. In a second time, gp160 transits in the host Golgi, where glycosylation is completed. The precursor is then proteolytically cleaved in the trans-Golgi and thereby activated by cellular furin or furin-like proteases to produce gp120 and gp41. Attaches the virus to the host lymphoid cell by binding to the primary receptor CD4. This interaction induces a structural rearrangement creating a high affinity binding site for a chemokine coreceptor like CXCR4 and/or CCR5. Acts as a ligand for CD209/DC-SIGN and CLEC4M/DC-SIGNR, which are respectively found on dendritic cells (DCs), and on endothelial cells of liver sinusoids and lymph node sinuses. These interactions allow capture of viral particles at mucosal surfaces by these cells and subsequent transmission to permissive cells. HIV subverts the migration properties of dendritic cells to gain access to CD4+ T-cells in lymph nodes. Virus transmission to permissive T-cells occurs either in trans (without DCs infection, through viral capture and transmission), or in cis (following DCs productive infection, through the usual CD4-gp120 interaction), thereby inducing a robust infection. In trans infection, bound virions remain infectious over days and it is proposed that they are not degraded, but protected in non-lysosomal acidic organelles within the DCs close to the cell membrane thus contributing to the viral infectious potential during DCs' migration from the periphery to the lymphoid tissues. On arrival at lymphoid tissues, intact virions recycle back to DCs' cell surface allowing virus transmission to CD4+ T-cells. In terms of biological role, acts as a class I viral fusion protein. Under the current model, the protein has at least 3 conformational states: pre-fusion native state, pre-hairpin intermediate state, and post-fusion hairpin state. During fusion of viral and target intracellular membranes, the coiled coil regions (heptad repeats) assume a trimer-of-hairpins structure, positioning the fusion peptide in close proximity to the C-terminal region of the ectodomain. The formation of this structure appears to drive apposition and subsequent fusion of viral and target cell membranes. Complete fusion occurs in host cell endosomes and is dynamin-dependent, however some lipid transfer might occur at the plasma membrane. The virus undergoes clathrin-dependent internalization long before endosomal fusion, thus minimizing the surface exposure of conserved viral epitopes during fusion and reducing the efficacy of inhibitors targeting these epitopes. Membranes fusion leads to delivery of the nucleocapsid into the cytoplasm. In Homo sapiens (Human), this protein is Envelope glycoprotein gp160.